The sequence spans 426 residues: Divalent metal cation transporter MntH (426 aa).

10 helical membrane-spanning segments follow: residues 31-51 (WYLL…GNVA), 58-78 (AQFG…AGLV), 134-156 (ILFR…LLLM), 169-189 (VITG…FVAT), 208-228 (SVLL…VYLH), 256-276 (VILA…VAAI), 298-318 (LGAT…LASA), 337-357 (IPML…LALG), 363-383 (ALVL…LPLV), and 402-422 (TVLG…LIYL).

Belongs to the NRAMP family.

It localises to the cell membrane. H(+)-stimulated, divalent metal cation uptake system. This Mycobacterium leprae (strain TN) protein is Divalent metal cation transporter MntH.